The chain runs to 177 residues: MSRVAKNPVKLPAGVEIKLAGQQLSIKGAKGALELKVHPSVEVIQDSGELRFAARNGDQQTRAMAGTTRALVNNMVVGVSQGFERKLQLVGVGYKAQAKGQVLSLSLGFSHPVDYELPAGIVAETPSQTDILIKGIDKQLVGQVAAEIRDFRPPEPYKGKGVRYADEVVRRKEAKKK.

The protein belongs to the universal ribosomal protein uL6 family. Part of the 50S ribosomal subunit.

This protein binds to the 23S rRNA, and is important in its secondary structure. It is located near the subunit interface in the base of the L7/L12 stalk, and near the tRNA binding site of the peptidyltransferase center. This Pseudomonas paraeruginosa (strain DSM 24068 / PA7) (Pseudomonas aeruginosa (strain PA7)) protein is Large ribosomal subunit protein uL6.